The primary structure comprises 200 residues: MSKFLQQKPIILASSSTIRHKLMKSLGLDFLVVPSNCNEEEIKTRHNSDELVKLGITLAKIKALDVSQHYPEHYIIAADQLCIADKRVFNKPLNHQTAVSHLRELSGKQHQQIACLCIVKESKILWQYHETATLTLHHLSEKTIEAYLQAEKPYQSCGAYQYEGLGKWLFKEVQGSEDTILGLPLMPLVNALVNLKVVGI.

Residue D79 is the Proton acceptor of the active site.

It belongs to the Maf family. A divalent metal cation is required as a cofactor.

Its subcellular location is the cytoplasm. It catalyses the reaction a ribonucleoside 5'-triphosphate + H2O = a ribonucleoside 5'-phosphate + diphosphate + H(+). The catalysed reaction is a 2'-deoxyribonucleoside 5'-triphosphate + H2O = a 2'-deoxyribonucleoside 5'-phosphate + diphosphate + H(+). In terms of biological role, nucleoside triphosphate pyrophosphatase. May have a dual role in cell division arrest and in preventing the incorporation of modified nucleotides into cellular nucleic acids. This is Nucleoside triphosphate pyrophosphatase from Legionella pneumophila (strain Lens).